A 1537-amino-acid chain; its full sequence is Isocyanide synthase-NRPS hybrid crmA (1537 aa).

Residues 1-502 (MFHKEAGISH…CVKAGYAALF (502 aa)) form an isocyanide synthase domain region. Residues 351–391 (PSVPVSPGMSSPSAASTSSSGASMQGSAATTPETHSPPTFT) form a disordered region. Positions 352-381 (SVPVSPGMSSPSAASTSSSGASMQGSAATT) are enriched in low complexity. A compositionally biased stretch (polar residues) spans 382 to 391 (PETHSPPTFT). Positions 573-752 (EAINDPFCFL…GNLIPPREDW (180 aa)) are adenylation. In terms of domain architecture, Carrier spans 941-1019 (SSAHSIEDNV…RLSAIIALLA (79 aa)). Ser977 is modified (O-(pantetheine 4'-phosphoryl)serine). Positions 1293 to 1526 (RCLKTTMFLV…LEMLVTDEEF (234 aa)) are transferase.

In the N-terminal section; belongs to the isocyanide synthase family. The protein in the C-terminal section; belongs to the NRP synthetase family.

Its pathway is secondary metabolite biosynthesis. Its function is as follows. Isocyanide synthase-NRPS hybrid; part of the crm gene cluster that mediates the biosynthesis of a yet unidentified copper-responsive metabolite. Converts valine into valine isocyanide that then contributes to two distinct biosynthetic pathways under copper-limiting conditions. Reaction of valine isocyanide with the imine intermediate of festuclavine results in formation of the amide bond in fumivaline A. In addition, valine isocyanide contributes to biosynthesis of a family of acylated sugar alcohols, the D-mannitol-derived fumicicolins. CrmA and associated products inhibit microbial growth from copper-starved A.fumigatus. This Aspergillus fumigatus (strain ATCC MYA-4609 / CBS 101355 / FGSC A1100 / Af293) (Neosartorya fumigata) protein is Isocyanide synthase-NRPS hybrid crmA.